The primary structure comprises 192 residues: Large ribosomal subunit protein uL3 (192 aa).

Belongs to the universal ribosomal protein uL3 family. In terms of assembly, part of the 50S ribosomal subunit. Forms a cluster with proteins L14 and L19.

One of the primary rRNA binding proteins, it binds directly near the 3'-end of the 23S rRNA, where it nucleates assembly of the 50S subunit. This is Large ribosomal subunit protein uL3 (rplC) from Helicobacter hepaticus (strain ATCC 51449 / 3B1).